A 410-amino-acid polypeptide reads, in one-letter code: Multifunctional CCA protein (410 aa).

ATP is bound by residues glycine 8 and arginine 11. CTP is bound by residues glycine 8 and arginine 11. Residues aspartate 21 and aspartate 23 each coordinate Mg(2+). Positions 91, 137, and 140 each coordinate ATP. CTP-binding residues include arginine 91, arginine 137, and arginine 140. Positions 228–329 (TGVHVLSVLQ…LELLQSFDVY (102 aa)) constitute an HD domain.

This sequence belongs to the tRNA nucleotidyltransferase/poly(A) polymerase family. Bacterial CCA-adding enzyme type 1 subfamily. As to quaternary structure, monomer. Can also form homodimers and oligomers. The cofactor is Mg(2+). Ni(2+) is required as a cofactor.

It catalyses the reaction a tRNA precursor + 2 CTP + ATP = a tRNA with a 3' CCA end + 3 diphosphate. The catalysed reaction is a tRNA with a 3' CCA end + 2 CTP + ATP = a tRNA with a 3' CCACCA end + 3 diphosphate. Its function is as follows. Catalyzes the addition and repair of the essential 3'-terminal CCA sequence in tRNAs without using a nucleic acid template. Adds these three nucleotides in the order of C, C, and A to the tRNA nucleotide-73, using CTP and ATP as substrates and producing inorganic pyrophosphate. tRNA 3'-terminal CCA addition is required both for tRNA processing and repair. Also involved in tRNA surveillance by mediating tandem CCA addition to generate a CCACCA at the 3' terminus of unstable tRNAs. While stable tRNAs receive only 3'-terminal CCA, unstable tRNAs are marked with CCACCA and rapidly degraded. The polypeptide is Multifunctional CCA protein (Pseudomonas aeruginosa (strain LESB58)).